A 101-amino-acid chain; its full sequence is Small ribosomal subunit protein uS14 (101 aa).

A disordered region spans residues 53–72 (RDAAAVRVRNRDSHDGRPRG). The span at 61-70 (RNRDSHDGRP) shows a compositional bias: basic and acidic residues.

The protein belongs to the universal ribosomal protein uS14 family. As to quaternary structure, part of the 30S ribosomal subunit. Contacts proteins S3 and S10.

In terms of biological role, binds 16S rRNA, required for the assembly of 30S particles and may also be responsible for determining the conformation of the 16S rRNA at the A site. The chain is Small ribosomal subunit protein uS14 from Corynebacterium glutamicum (strain ATCC 13032 / DSM 20300 / JCM 1318 / BCRC 11384 / CCUG 27702 / LMG 3730 / NBRC 12168 / NCIMB 10025 / NRRL B-2784 / 534).